The sequence spans 161 residues: Urocortin-3 (161 aa).

Residues Met-1–Gly-21 form the signal peptide. The propeptide occupies Leu-22–Thr-118. Residues Ser-64–Thr-118 are disordered. Position 157 is an isoleucine amide (Ile-157).

This sequence belongs to the sauvagine/corticotropin-releasing factor/urotensin I family. As to quaternary structure, binds with high affinity to CRF receptors 2-alpha and 2-beta.

It localises to the secreted. Functionally, suppresses food intake, delays gastric emptying and decreases heat-induced edema. Might represent an endogenous ligand for maintaining homeostasis after stress. The chain is Urocortin-3 (UCN3) from Homo sapiens (Human).